A 300-amino-acid polypeptide reads, in one-letter code: 33 kDa chaperonin (300 aa).

Disulfide bonds link cysteine 247/cysteine 249 and cysteine 280/cysteine 283.

It belongs to the HSP33 family. In terms of processing, under oxidizing conditions two disulfide bonds are formed involving the reactive cysteines. Under reducing conditions zinc is bound to the reactive cysteines and the protein is inactive.

It localises to the cytoplasm. Functionally, redox regulated molecular chaperone. Protects both thermally unfolding and oxidatively damaged proteins from irreversible aggregation. Plays an important role in the bacterial defense system toward oxidative stress. This Prochlorococcus marinus subsp. pastoris (strain CCMP1986 / NIES-2087 / MED4) protein is 33 kDa chaperonin.